A 1418-amino-acid chain; its full sequence is ABC transporter G family member 38 (1418 aa).

Residues M1–D27 form a disordered region. Residues T147–E419 form the ABC transporter 1 domain. G179 to S186 provides a ligand contact to ATP. An ABC transmembrane type-2 1 domain is found at E497–F710. Helical transmembrane passes span T516–W536, G548–F568, I600–T620, Y634–V654, V659–V679, and F729–L749. Residues M821–R1073 form the ABC transporter 2 domain. G866–T873 is an ATP binding site. In terms of domain architecture, ABC transmembrane type-2 2 spans S1146–Y1360. The next 7 helical transmembrane spans lie at A1167 to L1187, I1197 to A1217, V1249 to G1269, I1284 to V1304, I1310 to I1330, W1341 to G1361, and F1387 to A1407.

Belongs to the ABC transporter superfamily. ABCG family. PDR (TC 3.A.1.205) subfamily. Expressed in roots and siliques at low levels.

It localises to the membrane. In terms of biological role, may be a general defense protein. In Arabidopsis thaliana (Mouse-ear cress), this protein is ABC transporter G family member 38 (ABCG38).